Consider the following 148-residue polypeptide: Large ribosomal subunit protein bL9 (148 aa).

It belongs to the bacterial ribosomal protein bL9 family.

Its function is as follows. Binds to the 23S rRNA. The polypeptide is Large ribosomal subunit protein bL9 (Thermobifida fusca (strain YX)).